A 295-amino-acid chain; its full sequence is Protease Rv3090 (295 aa).

Transmembrane regions (helical) follow at residues 2–22 and 37–57; these read TWQI…ALFW and VTIA…FTIV.

It is found in the cell membrane. It localises to the secreted. The protein localises to the cell wall. Functionally, protease that triggers late cell apoptosis and contributes to the pathogenicity and dissemination of M.tuberculosis. In a mouse model of infection, can induce hepatocyte and lung cell apoptosis and cause pathological damage to the spleen, liver and lungs. Specifically stimulates the secretion of inflammatory cytokines including TNF-alpha, IL-6 and IL-1 beta. Can degrade casein in vitro. The chain is Protease Rv3090 from Mycobacterium tuberculosis (strain ATCC 25618 / H37Rv).